Consider the following 576-residue polypeptide: Nuclear receptor subfamily 1 group D member 2 (576 aa).

Positions Met-1–Ile-60 are required for phosphorylation by CSNK1E and cytoplasmic localization. Positions Met-1–Met-99 are modulating. The span at Ser-13 to Ser-47 shows a compositional bias: low complexity. The tract at residues Ser-13–His-90 is disordered. A Phosphoserine; by GSK3-beta modification is found at Ser-46. The segment at residues Val-100 to Phe-176 is a DNA-binding region (nuclear receptor). 2 NR C4-type zinc fingers span residues Cys-103 to Cys-123 and Cys-140 to Cys-164. N6-acetyllysine; by KAT5 occurs at positions 162 and 163. 2 disordered regions span residues Gln-215–Ala-246 and Leu-263–Glu-282. Basic and acidic residues-rich tracts occupy residues Leu-227–Asn-237 and Leu-263–Ser-272. Disulfide bonds link Cys-334-Cys-340 and Cys-371-Cys-381. In terms of domain architecture, NR LBD spans Arg-366–Pro-576. Heme is bound by residues Cys-381 and His-565. The tract at residues Ser-394–Pro-576 is interaction with ZNHIT1.

This sequence belongs to the nuclear hormone receptor family. NR1 subfamily. As to quaternary structure, binds DNA as a monomer or a homodimer. Interacts with NCOA5 coactivator, leading to a strong increase of transcription of target genes. Interacts (via N-terminus) with KAT5. Interacts (via C-terminus) with HDAC1. Interacts with ZNHIT1. Interacts with SIAH2. Post-translationally, deacetylated by HDAC1. Acetylation and deacetylation regulate its transcriptional regulatory activity. In terms of processing, under more reducing intracellular redox conditions, Cys-381 is in its heme-bound state, which is optimal for recruitment of the NCOR1/HDAC3 corepressor complex and repression of target genes. When subjected to oxidative stress conditions, Cys-381 undergoes oxidation to form a disulfide bridge with Cys-371, also triggering a ligand switch that results in release of bound heme and derepression of target genes. Ubiquitinated by SIAH2; leading to its proteasomal degradation. Post-translationally, phosphorylated by CSNK1E; phosphorylation enhances its cytoplasmic localization. As to expression, ubiquitous. Expressed abundantly in skeletal muscle and brown adipose tissue. Expressed during skeletal muscle myogenesis.

Its subcellular location is the nucleus. It is found in the cytoplasm. Its activity is regulated as follows. The heme-bound form can bind gaseous signaling molecules such as CO and nitric oxide (NO) and NO can reverse its transcriptional repressor activity. Transcriptional repressor which coordinates circadian rhythm and metabolic pathways in a heme-dependent manner. Integral component of the complex transcription machinery that governs circadian rhythmicity and forms a critical negative limb of the circadian clock by directly repressing the expression of core clock components BMAL1 and CLOCK. Also regulates genes involved in metabolic functions, including lipid metabolism and the inflammatory response. Acts as a receptor for heme which stimulates its interaction with the NCOR1/HDAC3 corepressor complex, enhancing transcriptional repression. Recognizes two classes of DNA response elements within the promoter of its target genes and can bind to DNA as either monomers or homodimers, depending on the nature of the response element. Binds as a monomer to a response element composed of the consensus half-site motif 5'-[A/G]GGTCA-3' preceded by an A/T-rich 5' sequence (RevRE), or as a homodimer to a direct repeat of the core motif spaced by two nuclegotides (RevDR-2). Acts as a potent competitive repressor of ROR alpha (RORA) function and also negatively regulates the expression of NR1D1. Regulates lipid and energy homeostasis in the skeletal muscle via repression of genes involved in lipid metabolism and myogenesis including: CD36, FABP3, FABP4, UCP3, SCD1 and MSTN. Regulates hepatic lipid metabolism via the repression of APOC3. Represses gene expression at a distance in macrophages by inhibiting the transcription of enhancer-derived RNAs (eRNAs). In addition to its activity as a repressor, can also act as a transcriptional activator. Acts as a transcriptional activator of the sterol regulatory element-binding protein 1 (SREBF1) and the inflammatory mediator interleukin-6 (IL6) in the skeletal muscle. Plays a role in the regulation of circadian sleep/wake cycle; essential for maintaining wakefulness during the dark phase or active period. Key regulator of skeletal muscle mitochondrial function; negatively regulates the skeletal muscle expression of core clock genes and genes involved in mitochondrial biogenesis, fatty acid beta-oxidation and lipid metabolism. May play a role in the circadian control of neutrophilic inflammation in the lung. This chain is Nuclear receptor subfamily 1 group D member 2, found in Mus musculus (Mouse).